The sequence spans 491 residues: Cytosolic Fe-S cluster assembly factor NAR1 (491 aa).

Positions 20, 65, 68, 71, 177, 232, 414, and 418 each coordinate [4Fe-4S] cluster.

This sequence belongs to the NARF family.

In terms of biological role, component of the cytosolic Fe/S protein assembly machinery. Required for maturation of extramitochondrial Fe/S proteins. May play a role in the transfer of pre-assembled Fe/S clusters to target apoproteins. In Yarrowia lipolytica (strain CLIB 122 / E 150) (Yeast), this protein is Cytosolic Fe-S cluster assembly factor NAR1 (NAR1).